We begin with the raw amino-acid sequence, 414 residues long: Isocitrate dehydrogenase [NADP] cytoplasmic (414 aa).

At serine 2 the chain carries N-acetylserine. Position 42 is a phosphotyrosine (tyrosine 42). 75-77 is a binding site for NADP(+); sequence TIT. Threonine 77 serves as a coordination point for substrate. At lysine 81 the chain carries N6-acetyllysine. Arginine 82 serves as a coordination point for NADP(+). Residues 94–100 and arginine 109 contribute to the substrate site; that span reads SPNGTIR. An N6-succinyllysine modification is found at lysine 126. The substrate site is built by arginine 132 and lysine 212. N6-acetyllysine occurs at positions 224, 233, and 243. Aspartate 252 is a Mn(2+) binding site. NADP(+) is bound at residue lysine 260. Aspartate 275 and aspartate 279 together coordinate Mn(2+). Position 310–315 (310–315) interacts with NADP(+); that stretch reads GTVTRH. Position 321 is an N6-acetyllysine (lysine 321). Residue asparagine 328 participates in NADP(+) binding. Serine 389 bears the Phosphoserine mark. Lysine 400 carries the post-translational modification N6-succinyllysine.

The protein belongs to the isocitrate and isopropylmalate dehydrogenases family. As to quaternary structure, homodimer. The cofactor is Mg(2+). Requires Mn(2+) as cofactor. In terms of processing, acetylation at Lys-374 dramatically reduces catalytic activity. In terms of tissue distribution, highly expressed in the liver followed by kidney, lower expression in spleen, brain and lung.

It is found in the cytoplasm. The protein localises to the cytosol. It carries out the reaction D-threo-isocitrate + NADP(+) = 2-oxoglutarate + CO2 + NADPH. Irreversibly inhibited by Cd(2+) concentrations above 50 uM. In terms of biological role, catalyzes the NADP(+)-dependent oxidative decarboxylation of isocitrate (D-threo-isocitrate) to 2-ketoglutarate (2-oxoglutarate), which is required by other enzymes such as the phytanoyl-CoA dioxygenase. Plays a critical role in the generation of NADPH, an important cofactor in many biosynthesis pathways. May act as a corneal epithelial crystallin and may be involved in maintaining corneal epithelial transparency. This Mus musculus (Mouse) protein is Isocitrate dehydrogenase [NADP] cytoplasmic (Idh1).